A 218-amino-acid chain; its full sequence is ATP phosphoribosyltransferase (218 aa).

It belongs to the ATP phosphoribosyltransferase family. Short subfamily. In terms of assembly, heteromultimer composed of HisG and HisZ subunits.

The protein localises to the cytoplasm. It carries out the reaction 1-(5-phospho-beta-D-ribosyl)-ATP + diphosphate = 5-phospho-alpha-D-ribose 1-diphosphate + ATP. It functions in the pathway amino-acid biosynthesis; L-histidine biosynthesis; L-histidine from 5-phospho-alpha-D-ribose 1-diphosphate: step 1/9. Its function is as follows. Catalyzes the condensation of ATP and 5-phosphoribose 1-diphosphate to form N'-(5'-phosphoribosyl)-ATP (PR-ATP). Has a crucial role in the pathway because the rate of histidine biosynthesis seems to be controlled primarily by regulation of HisG enzymatic activity. This is ATP phosphoribosyltransferase from Burkholderia mallei (strain ATCC 23344).